Consider the following 351-residue polypeptide: Transmembrane protein 115 (351 aa).

Over 1-19 (MQRALPGARQHLGAILASA) the chain is Cytoplasmic. The tract at residues 1–205 (MQRALPGARQ…FGLLSSWVYL (205 aa)) is mediates homooligomerization. A helical transmembrane segment spans residues 20–40 (SVVVKALCAAVLFLYLLSFAV). At 41 to 97 (DTGCLAVTPGYLFPPNFWIWTLATHGLMEQHVWDVAISLTTVVVAGRLLEPLWGALE) the chain is on the lumenal side. The helical transmembrane segment at 98 to 118 (LLIFFSVVNVSVGLLGAFAYL) threads the bilayer. At 119-126 (LTYMASFN) the chain is on the cytoplasmic side. The chain crosses the membrane as a helical span at residues 127–147 (LVYLFTVRIHGALGFLGGVLV). The Lumenal segment spans residues 148–165 (ALKQTMGDCVVLRVPQVR). Residues 166-186 (VSVMPMLLLALLLLLRLATLL) form a helical membrane-spanning segment. Over 187–351 (QSPALASYGF…ITFEAAPPTL (165 aa)) the chain is Cytoplasmic. Positions 206–229 (RFYQRHSRGRGDMADHFAFATFFP) are mediates localization to the Golgi. The segment at 301–351 (QSIWPSMDDDEEESGAKVDSPLPSDKAPTPPGKGAAPESSLITFEAAPPTL) is disordered. Thr-329 is subject to Phosphothreonine.

It belongs to the TMEM115 family. Homooligomer. Interacts with COPB1. May interact with LMAN1. Interacts with the COG complex; probably through COG3. Expressed strongly in kidney and skeletal muscle, followed by liver, placenta, pancreas, and lung, with low amounts in heart and only traces in brain. Widely expressed with ubiquitous expression in epithelial tissues (at protein level).

Its subcellular location is the golgi apparatus. The protein localises to the golgi stack membrane. In terms of biological role, may play a role in retrograde transport of proteins from the Golgi to the endoplasmic reticulum. May indirectly play a role in protein glycosylation in the Golgi. This chain is Transmembrane protein 115, found in Homo sapiens (Human).